Reading from the N-terminus, the 634-residue chain is 1-deoxy-D-xylulose-5-phosphate synthase (634 aa).

Thiamine diphosphate contacts are provided by residues H74 and 115-117 (AHS). Mg(2+) is bound at residue D146. Residues 147-148 (GA), N176, Y283, and E365 contribute to the thiamine diphosphate site. Position 176 (N176) interacts with Mg(2+).

The protein belongs to the transketolase family. DXPS subfamily. As to quaternary structure, homodimer. Requires Mg(2+) as cofactor. Thiamine diphosphate serves as cofactor.

The catalysed reaction is D-glyceraldehyde 3-phosphate + pyruvate + H(+) = 1-deoxy-D-xylulose 5-phosphate + CO2. Its pathway is metabolic intermediate biosynthesis; 1-deoxy-D-xylulose 5-phosphate biosynthesis; 1-deoxy-D-xylulose 5-phosphate from D-glyceraldehyde 3-phosphate and pyruvate: step 1/1. Its function is as follows. Catalyzes the acyloin condensation reaction between C atoms 2 and 3 of pyruvate and glyceraldehyde 3-phosphate to yield 1-deoxy-D-xylulose-5-phosphate (DXP). In Burkholderia cenocepacia (strain ATCC BAA-245 / DSM 16553 / LMG 16656 / NCTC 13227 / J2315 / CF5610) (Burkholderia cepacia (strain J2315)), this protein is 1-deoxy-D-xylulose-5-phosphate synthase.